Here is a 201-residue protein sequence, read N- to C-terminus: MTARELSIAGAWEITPVLRTDSRGLFFEWFTDAGFTEFAGHQFDMRQANCSVSARGVLRGVHFAQVPPSQAKYVTCVRGAVFDVVVDIRVGSPTFGQWDAVLLDDKDRRSIYISEGLGHAFLALDDDSTVMYLCSAPYAPQREHTVRPTDFGIEWPEVPELILSDRDAQAPSLAEAQAAGVLPTWADCQAFVETLRRNLVS.

Substrate contacts are provided by residues arginine 23, glutamate 28, 47 to 49 (QAN), and arginine 59. Catalysis depends on histidine 62, which acts as the Proton acceptor. Residues lysine 72 and histidine 119 each coordinate substrate. The active-site Proton donor is the tyrosine 132. The substrate site is built by glutamate 143 and arginine 166.

This sequence belongs to the dTDP-4-dehydrorhamnose 3,5-epimerase family. Homodimer.

The enzyme catalyses dTDP-4-dehydro-6-deoxy-alpha-D-glucose = dTDP-4-dehydro-beta-L-rhamnose. It participates in carbohydrate biosynthesis; dTDP-L-rhamnose biosynthesis. Catalyzes the epimerization of the C3' and C5'positions of dTDP-6-deoxy-D-xylo-4-hexulose, forming dTDP-6-deoxy-L-lyxo-4-hexulose. Involved in the biosynthesis of the dTDP-L-rhamnose which is a component of the critical linker, D-N-acetylglucosamine-L-rhamnose disaccharide, which connects the galactan region of arabinogalactan to peptidoglycan via a phosphodiester linkage. This is dTDP-4-dehydrorhamnose 3,5-epimerase (rmlC) from Mycolicibacterium smegmatis (strain ATCC 700084 / mc(2)155) (Mycobacterium smegmatis).